The sequence spans 215 residues: Peroxiredoxin-5, mitochondrial (215 aa).

The N-terminal 53 residues, 1-53 (MGLAGVCVLRRSAGYILGGAARQSVAATAAARRRSEGGWASGGVRSFSRAAAA), are a transit peptide targeting the mitochondrion. The 159-residue stretch at 57–215 (IKVGDAIPAV…SLAPSIISQL (159 aa)) folds into the Thioredoxin domain. At Lys76 the chain carries N6-acetyllysine. The residue at position 84 (Lys84) is an N6-acetyllysine; alternate. Position 84 is an N6-succinyllysine; alternate (Lys84). Cys101 serves as the catalytic Cysteine sulfenic acid (-SOH) intermediate. Cys101 carries S-palmitoyl cysteine lipidation. Cys101 and Cys205 form a disulfide bridge. Lys117 bears the N6-succinyllysine mark. Ser172 and Ser183 each carry phosphoserine. The Microbody targeting signal signature appears at 213-215 (SQL).

Belongs to the peroxiredoxin family. Prx5 subfamily. Monomer. S-palmitoylated. Palmitoylation occurs on the active site, inhibiting its reactivity; therefore PRDX5 palmitoylation status determines its antioxidant capacity. Post-translationally, S-palmitoylated. Depalmitoylated by ABHD10.

The protein localises to the mitochondrion. The protein resides in the cytoplasm. It localises to the peroxisome matrix. It carries out the reaction a hydroperoxide + [thioredoxin]-dithiol = an alcohol + [thioredoxin]-disulfide + H2O. Functionally, thiol-specific peroxidase that catalyzes the reduction of hydrogen peroxide and organic hydroperoxides to water and alcohols, respectively. Plays a role in cell protection against oxidative stress by detoxifying peroxides and as sensor of hydrogen peroxide-mediated signaling events. The protein is Peroxiredoxin-5, mitochondrial (PRDX5) of Chlorocebus aethiops (Green monkey).